A 282-amino-acid polypeptide reads, in one-letter code: 4-hydroxy-tetrahydrodipicolinate reductase (282 aa).

12-17 is an NAD(+) binding site; sequence GVTGRM. R44 contacts NADP(+). NAD(+)-binding positions include 107 to 109 and 131 to 134; these read GTT and SSNF. H164 functions as the Proton donor/acceptor in the catalytic mechanism. H165 lines the (S)-2,3,4,5-tetrahydrodipicolinate pocket. K168 acts as the Proton donor in catalysis. Residue 174-175 coordinates (S)-2,3,4,5-tetrahydrodipicolinate; that stretch reads GT.

The protein belongs to the DapB family. Homotetramer.

It localises to the cytoplasm. It catalyses the reaction (S)-2,3,4,5-tetrahydrodipicolinate + NAD(+) + H2O = (2S,4S)-4-hydroxy-2,3,4,5-tetrahydrodipicolinate + NADH + H(+). The catalysed reaction is (S)-2,3,4,5-tetrahydrodipicolinate + NADP(+) + H2O = (2S,4S)-4-hydroxy-2,3,4,5-tetrahydrodipicolinate + NADPH + H(+). It functions in the pathway amino-acid biosynthesis; L-lysine biosynthesis via DAP pathway; (S)-tetrahydrodipicolinate from L-aspartate: step 4/4. In terms of biological role, catalyzes the conversion of 4-hydroxy-tetrahydrodipicolinate (HTPA) to tetrahydrodipicolinate. The polypeptide is 4-hydroxy-tetrahydrodipicolinate reductase (Blochmanniella pennsylvanica (strain BPEN)).